The chain runs to 227 residues: MAYPMQLGFQDATSPIMEELLHFHDHTLMIVFLISSLVLYIISLMLTTKLTHTSTMDAQEVETIWTILPAIILIMIALPSLRILYMMDEINNPSLTVKTMGHQWYWSYEYTDYEDLSFDSYMIPTSELKPGELRLLEVDNRVVLPMEMTVRMLISSEDVLPSWAVPSLGLKTDAIPGRLNQTTLMSTRPGLFYGQCSEICGSNHSFMPIVLELVPLKYFEKWSASML.

Over 1–14 (MAYPMQLGFQDATS) the chain is Mitochondrial intermembrane. Residues 15–45 (PIMEELLHFHDHTLMIVFLISSLVLYIISLM) form a helical membrane-spanning segment. The Mitochondrial matrix segment spans residues 46-59 (LTTKLTHTSTMDAQ). The helical transmembrane segment at 60–87 (EVETIWTILPAIILIMIALPSLRILYMM) threads the bilayer. Residues 88–227 (DEINNPSLTV…YFEKWSASML (140 aa)) lie on the Mitochondrial intermembrane side of the membrane. Positions 196, 198, 200, 204, and 207 each coordinate Cu cation. Glu-198 contributes to the Mg(2+) binding site. Tyr-218 carries the post-translational modification Phosphotyrosine.

The protein belongs to the cytochrome c oxidase subunit 2 family. As to quaternary structure, component of the cytochrome c oxidase (complex IV, CIV), a multisubunit enzyme composed of 14 subunits. The complex is composed of a catalytic core of 3 subunits MT-CO1, MT-CO2 and MT-CO3, encoded in the mitochondrial DNA, and 11 supernumerary subunits COX4I, COX5A, COX5B, COX6A, COX6B, COX6C, COX7A, COX7B, COX7C, COX8 and NDUFA4, which are encoded in the nuclear genome. The complex exists as a monomer or a dimer and forms supercomplexes (SCs) in the inner mitochondrial membrane with NADH-ubiquinone oxidoreductase (complex I, CI) and ubiquinol-cytochrome c oxidoreductase (cytochrome b-c1 complex, complex III, CIII), resulting in different assemblies (supercomplex SCI(1)III(2)IV(1) and megacomplex MCI(2)III(2)IV(2)). Found in a complex with TMEM177, COA6, COX18, COX20, SCO1 and SCO2. Interacts with TMEM177 in a COX20-dependent manner. Interacts with COX20. Interacts with COX16. It depends on Cu cation as a cofactor.

It is found in the mitochondrion inner membrane. The catalysed reaction is 4 Fe(II)-[cytochrome c] + O2 + 8 H(+)(in) = 4 Fe(III)-[cytochrome c] + 2 H2O + 4 H(+)(out). Functionally, component of the cytochrome c oxidase, the last enzyme in the mitochondrial electron transport chain which drives oxidative phosphorylation. The respiratory chain contains 3 multisubunit complexes succinate dehydrogenase (complex II, CII), ubiquinol-cytochrome c oxidoreductase (cytochrome b-c1 complex, complex III, CIII) and cytochrome c oxidase (complex IV, CIV), that cooperate to transfer electrons derived from NADH and succinate to molecular oxygen, creating an electrochemical gradient over the inner membrane that drives transmembrane transport and the ATP synthase. Cytochrome c oxidase is the component of the respiratory chain that catalyzes the reduction of oxygen to water. Electrons originating from reduced cytochrome c in the intermembrane space (IMS) are transferred via the dinuclear copper A center (CU(A)) of subunit 2 and heme A of subunit 1 to the active site in subunit 1, a binuclear center (BNC) formed by heme A3 and copper B (CU(B)). The BNC reduces molecular oxygen to 2 water molecules using 4 electrons from cytochrome c in the IMS and 4 protons from the mitochondrial matrix. The chain is Cytochrome c oxidase subunit 2 (MT-CO2) from Ovis aries (Sheep).